A 190-amino-acid polypeptide reads, in one-letter code: GTP cyclohydrolase 1 (190 aa).

Zn(2+) is bound by residues cysteine 75, histidine 78, and cysteine 146.

This sequence belongs to the GTP cyclohydrolase I family. As to quaternary structure, toroid-shaped homodecamer, composed of two pentamers of five dimers.

The catalysed reaction is GTP + H2O = 7,8-dihydroneopterin 3'-triphosphate + formate + H(+). The protein operates within cofactor biosynthesis; 7,8-dihydroneopterin triphosphate biosynthesis; 7,8-dihydroneopterin triphosphate from GTP: step 1/1. The chain is GTP cyclohydrolase 1 from Campylobacter curvus (strain 525.92).